Reading from the N-terminus, the 419-residue chain is Enolase (419 aa).

A (2R)-2-phosphoglycerate-binding site is contributed by Gln-161. Glu-205 acts as the Proton donor in catalysis. Residues Asp-240, Glu-283, and Asp-309 each coordinate Mg(2+). The (2R)-2-phosphoglycerate site is built by Lys-334, Arg-363, Ser-364, and Lys-385. Residue Lys-334 is the Proton acceptor of the active site.

Belongs to the enolase family. Requires Mg(2+) as cofactor.

It localises to the cytoplasm. The protein resides in the secreted. Its subcellular location is the cell surface. The enzyme catalyses (2R)-2-phosphoglycerate = phosphoenolpyruvate + H2O. Its pathway is carbohydrate degradation; glycolysis; pyruvate from D-glyceraldehyde 3-phosphate: step 4/5. Its function is as follows. Catalyzes the reversible conversion of 2-phosphoglycerate (2-PG) into phosphoenolpyruvate (PEP). It is essential for the degradation of carbohydrates via glycolysis. This is Enolase from Saccharolobus solfataricus (strain ATCC 35092 / DSM 1617 / JCM 11322 / P2) (Sulfolobus solfataricus).